The chain runs to 123 residues: Defensin beta 118 (123 aa).

Positions 1-19 (MKLLLLALPMLVLLPQVIP) are cleaved as a signal peptide. Disulfide bonds link C27/C54, C34/C48, and C38/C55. Positions 65-123 (VPATSPTPLSDSTPGIIDDILTVRFTTDYFEVSSKKDMVEESEAGRGTETSLPNVHHSS) are excised as a propeptide. Positions 100-110 (KDMVEESEAGR) are enriched in basic and acidic residues. The tract at residues 100 to 123 (KDMVEESEAGRGTETSLPNVHHSS) is disordered. The segment covering 112-123 (TETSLPNVHHSS) has biased composition (polar residues).

The protein belongs to the beta-defensin family. The three-dimensional structure formed by the three intramolecular disulfide bridges is indispensable for antimicrobial activity. As to expression, high-level and epididymis-specific expression. Most abundant in the epithelium of the caput and present in the epididymis lumen and bound to sperm. Also expressed in pancreas.

Its subcellular location is the secreted. Host defense peptide that exhibits antimicrobial activity against both Gram-negative bacteria, such as E.coli and S.typhimurium, and Gram-positive bacteria, such as S.aureus and B.subtilis. Inhibits cell adhesion of E.coli on intestinal epithelial enterocytes. Causes rapid permeabilization of both the outer and inner membrane of E.coli, leading to morphological alterations on the bacterial surface. Binds to bacterial lipopolysaccharides (LPS) with high affinity, and may thereby be involved in immunoregulation through LPS neutralization. May contribute to epididymal innate immunity and protect the sperm against attack by microorganisms. This chain is Defensin beta 118 (DEFB118), found in Homo sapiens (Human).